We begin with the raw amino-acid sequence, 116 residues long: UPF0122 protein CA_C1753 (116 aa).

It belongs to the UPF0122 family.

In terms of biological role, might take part in the signal recognition particle (SRP) pathway. This is inferred from the conservation of its genetic proximity to ftsY/ffh. May be a regulatory protein. The chain is UPF0122 protein CA_C1753 from Clostridium acetobutylicum (strain ATCC 824 / DSM 792 / JCM 1419 / IAM 19013 / LMG 5710 / NBRC 13948 / NRRL B-527 / VKM B-1787 / 2291 / W).